The chain runs to 367 residues: 2-aminoethylphosphonate--pyruvate transaminase (367 aa).

Residue lysine 194 is modified to N6-(pyridoxal phosphate)lysine.

Belongs to the class-V pyridoxal-phosphate-dependent aminotransferase family. PhnW subfamily. As to quaternary structure, homodimer. It depends on pyridoxal 5'-phosphate as a cofactor.

It catalyses the reaction (2-aminoethyl)phosphonate + pyruvate = phosphonoacetaldehyde + L-alanine. Its function is as follows. Involved in phosphonate degradation. The sequence is that of 2-aminoethylphosphonate--pyruvate transaminase from Salmonella schwarzengrund (strain CVM19633).